The following is a 236-amino-acid chain: 5'-methylthioadenosine/S-adenosylhomocysteine nucleosidase (236 aa).

Glu-12 serves as the catalytic Proton acceptor. Substrate-binding positions include Gly-78, Ile-153, and 174 to 175 (ME). Asp-198 (proton donor) is an active-site residue.

The protein belongs to the PNP/UDP phosphorylase family. MtnN subfamily.

The enzyme catalyses S-adenosyl-L-homocysteine + H2O = S-(5-deoxy-D-ribos-5-yl)-L-homocysteine + adenine. The catalysed reaction is S-methyl-5'-thioadenosine + H2O = 5-(methylsulfanyl)-D-ribose + adenine. It carries out the reaction 5'-deoxyadenosine + H2O = 5-deoxy-D-ribose + adenine. The protein operates within amino-acid biosynthesis; L-methionine biosynthesis via salvage pathway; S-methyl-5-thio-alpha-D-ribose 1-phosphate from S-methyl-5'-thioadenosine (hydrolase route): step 1/2. In terms of biological role, catalyzes the irreversible cleavage of the glycosidic bond in both 5'-methylthioadenosine (MTA) and S-adenosylhomocysteine (SAH/AdoHcy) to adenine and the corresponding thioribose, 5'-methylthioribose and S-ribosylhomocysteine, respectively. Also cleaves 5'-deoxyadenosine, a toxic by-product of radical S-adenosylmethionine (SAM) enzymes, into 5-deoxyribose and adenine. This Shewanella oneidensis (strain ATCC 700550 / JCM 31522 / CIP 106686 / LMG 19005 / NCIMB 14063 / MR-1) protein is 5'-methylthioadenosine/S-adenosylhomocysteine nucleosidase.